Consider the following 522-residue polypeptide: Putative E3 ubiquitin-protein ligase RING1a (522 aa).

The span at Met-1 to Ser-10 shows a compositional bias: polar residues. The segment at Met-1 to Gln-119 is disordered. The segment covering Leu-32–Asp-64 has biased composition (basic and acidic residues). A compositionally biased stretch (acidic residues) spans Ala-65–Asp-106. The RING-type zinc-finger motif lies at Cys-136–Arg-176. 2 disordered regions span residues Val-250–Gly-347 and Arg-363–Arg-385. Over residues Asn-287–Arg-306 the composition is skewed to basic and acidic residues. Residues Ser-316–Ser-325 show a composition bias toward low complexity. Polar residues-rich tracts occupy residues Gly-326 to Asp-336 and Thr-366 to Val-384.

As to quaternary structure, homodimer or heterodimer with RING1B. Interacts with CLF. Component of the PRC1-like complex, at least composed of RING1A, RING1B and LHP1.

It is found in the nucleus. The enzyme catalyses S-ubiquitinyl-[E2 ubiquitin-conjugating enzyme]-L-cysteine + [acceptor protein]-L-lysine = [E2 ubiquitin-conjugating enzyme]-L-cysteine + N(6)-ubiquitinyl-[acceptor protein]-L-lysine.. It functions in the pathway protein modification; protein ubiquitination. Putative E3 ubiquitin-protein ligase that mediates monoubiquitination of 'Lys-119' of histone H2A (H2AK119ub), thereby playing a central role in histone code and gene regulation. Its function is as follows. As part of the PRC1-like complex, repress class I KNOX gene expression. PcG PRC1 complex maintains the transcriptionally repressive state of many genes, including Hox genes, throughout development. PcG PRC1 complex acts via chromatin remodeling and modification of histones, rendering chromatin heritably changed in its expressibility. In Arabidopsis thaliana (Mouse-ear cress), this protein is Putative E3 ubiquitin-protein ligase RING1a (RING1A).